The following is a 234-amino-acid chain: MLTRKQFELLKFINERLKEAGVPPSFDEMKDALDLRSKSGIHRLITALEERGFIRRLPNRARAIEVIKLPDLGGNSGARRGFTPSVIEGNLGKVRPPSPQHAEDDSDRNVAVPVMGRIAAGTPIEALQTRSHTISVPPDMLGSGEHYALEVRGDSMMDAGILDGDMALIQRNESADTGDIVVALIDEEEATLKRFRRRGASIALEPANSAYEVRILPPNRVRIQGKLIGLYRKY.

The segment at residues 26–46 (FDEMKDALDLRSKSGIHRLIT) is a DNA-binding region (H-T-H motif). A disordered region spans residues 80-107 (RGFTPSVIEGNLGKVRPPSPQHAEDDSD). Residues Ser155 and Lys193 each act as for autocatalytic cleavage activity in the active site.

The protein belongs to the peptidase S24 family. Homodimer.

The enzyme catalyses Hydrolysis of Ala-|-Gly bond in repressor LexA.. Represses a number of genes involved in the response to DNA damage (SOS response), including recA and lexA. In the presence of single-stranded DNA, RecA interacts with LexA causing an autocatalytic cleavage which disrupts the DNA-binding part of LexA, leading to derepression of the SOS regulon and eventually DNA repair. This chain is LexA repressor, found in Rhodopseudomonas palustris (strain HaA2).